The following is a 486-amino-acid chain: MTTFYTVLSWLTFFFYWLLIAGVTFRVLMHRRPVTSTMTWLLIIYILPLVGVIAYFAFGELHLGKRRVEHARQMWPSVVAWLEELKKCKHIFAKHYSDVAEPIFQLTAKRQGINGVKGNKIQLLTTCEDSLNAITRDINNARDNIEMVFYIWQSGGLVEEVTEALIQAAKRGVKCRIMVDSAGSRSFFRTNGPARMRAAGIEFVESLQVNLFRFFLRRMDLRQHRKIVLIDNYISYTGSMNMVDPRYFKQDAGVGQWIDIMVRMEGPVSTTLGIIYAFDWEMETGERHLPPPPDNNIMPFEQANGHTTQVIASGPGFPEELIQQSLITAIYSARKELVMTTPYFVPSDDLAHAISTAAMRGVDVSIIVPRSNDSFLVRWASRAFFTEILEAGVKVFQFEDGLLHTKSVMVDGQLSMVGSVNLDMRSLWLNFEITVVIDDECFASDLSIVQYDYIARSTQLTLDEWEKRPFMNRVLERLCYFFSPLL.

2 consecutive transmembrane segments (helical) span residues 3 to 23 (TFYTVLSWLTFFFYWLLIAGV) and 38 to 58 (MTWLLIIYILPLVGVIAYFAF). PLD phosphodiesterase domains follow at residues 219-246 (MDLRQHRKIVLIDNYISYTGSMNMVDPR) and 399-426 (EDGLLHTKSVMVDGQLSMVGSVNLDMRS). Active-site residues include His224, Lys226, Asp231, His404, Lys406, and Asp411.

The protein belongs to the phospholipase D family. Cardiolipin synthase subfamily. ClsA sub-subfamily.

It is found in the cell inner membrane. The catalysed reaction is 2 a 1,2-diacyl-sn-glycero-3-phospho-(1'-sn-glycerol) = a cardiolipin + glycerol. Catalyzes the reversible phosphatidyl group transfer from one phosphatidylglycerol molecule to another to form cardiolipin (CL) (diphosphatidylglycerol) and glycerol. This Proteus mirabilis (strain HI4320) protein is Cardiolipin synthase A.